The sequence spans 538 residues: MFS-type transporter tndD (538 aa).

The disordered stretch occupies residues 1 to 42; it reads MSLSGSDSHLAVSPTLAEDMNSSDTSAGLAETPPADEEKRSI. N-linked (GlcNAc...) asparagine glycosylation is found at asparagine 21 and asparagine 71. The next 11 membrane-spanning stretches (helical) occupy residues 81–101, 115–135, 153–173, 203–223, 235–255, 309–329, 348–368, 394–414, 422–442, 444–464, and 485–505; these read VGIV…FAPG, LLAG…PLIL, ICFT…MLIA, GGVI…GPVA, WVFW…FLFL, PIVA…YLMF, GLTF…IGAV, LPPL…YGWS, IVPI…FMCI, SYLV…NTVV, and LGWG…IPWA.

This sequence belongs to the major facilitator superfamily.

It is found in the membrane. In terms of biological role, MFS-type transporter; part of the gene cluster that mediates the biosynthesis of talaronoid C, a fusicoccane diterpenoid with an unprecedented tricyclic 5/8/6 ring system. This Aspergillus flavipes protein is MFS-type transporter tndD.